The following is a 60-amino-acid chain: Cytotoxin 4 (60 aa).

Disulfide bonds link Cys-3–Cys-21, Cys-14–Cys-38, Cys-42–Cys-53, and Cys-54–Cys-59.

It belongs to the three-finger toxin family. Short-chain subfamily. Type IA cytotoxin sub-subfamily. Monomer in solution; Homodimer and oligomer in the presence of negatively charged lipids forming a pore with a size ranging between 20 and 30 Angstroms. Expressed by the venom gland.

It localises to the secreted. Its subcellular location is the target cell membrane. Shows cytolytic activity on many different cells by forming pore in lipid membranes. In vivo, increases heart rate or kills the animal by cardiac arrest. In addition, it binds to heparin with high affinity, interacts with Kv channel-interacting protein 1 (KCNIP1) in a calcium-independent manner, and binds to integrin alpha-V/beta-3 (ITGAV/ITGB3) with moderate affinity. This Naja annulifera (Banded Egyptian cobra) protein is Cytotoxin 4.